The following is a 472-amino-acid chain: Aspartyl/glutamyl-tRNA(Asn/Gln) amidotransferase subunit B (472 aa).

It belongs to the GatB/GatE family. GatB subfamily. As to quaternary structure, heterotrimer of A, B and C subunits.

It carries out the reaction L-glutamyl-tRNA(Gln) + L-glutamine + ATP + H2O = L-glutaminyl-tRNA(Gln) + L-glutamate + ADP + phosphate + H(+). The enzyme catalyses L-aspartyl-tRNA(Asn) + L-glutamine + ATP + H2O = L-asparaginyl-tRNA(Asn) + L-glutamate + ADP + phosphate + 2 H(+). Allows the formation of correctly charged Asn-tRNA(Asn) or Gln-tRNA(Gln) through the transamidation of misacylated Asp-tRNA(Asn) or Glu-tRNA(Gln) in organisms which lack either or both of asparaginyl-tRNA or glutaminyl-tRNA synthetases. The reaction takes place in the presence of glutamine and ATP through an activated phospho-Asp-tRNA(Asn) or phospho-Glu-tRNA(Gln). The sequence is that of Aspartyl/glutamyl-tRNA(Asn/Gln) amidotransferase subunit B from Campylobacter jejuni subsp. doylei (strain ATCC BAA-1458 / RM4099 / 269.97).